The sequence spans 823 residues: Sphingomyelin phosphodiesterase 4 (823 aa).

Phosphoserine occurs at positions 130 and 245. Thr-665 carries the phosphothreonine modification. At Ser-749 the chain carries Phosphoserine. Residues 776-796 (LLLLLMAFFVASLFCIGPLSC) traverse the membrane as a helical segment.

Mg(2+) serves as cofactor. As to expression, expressed in skeletal muscle (at protein level). In terms of tissue distribution, expressed in skeletal muscle but a lower levels than isoform 1 (at protein level).

It localises to the endoplasmic reticulum membrane. It is found in the golgi apparatus membrane. Its subcellular location is the nucleus envelope. The protein resides in the cell membrane. The protein localises to the sarcolemma. The catalysed reaction is a sphingomyelin + H2O = phosphocholine + an N-acylsphing-4-enine + H(+). With respect to regulation, activated by phosphatidylserine and tumor necrosis factor (TNF). Inhibited by scyphostatin. Its function is as follows. Catalyzes the hydrolysis of membrane sphingomyelin to form phosphorylcholine and ceramide. It has a relevant role in the homeostasis of membrane sphingolipids, thereby influencing membrane integrity, and endoplasmic reticulum organization and function. May sensitize cells to DNA damage-induced apoptosis. In skeletal muscle, mediates TNF-stimulated oxidant production. This chain is Sphingomyelin phosphodiesterase 4 (Smpd4), found in Mus musculus (Mouse).